A 404-amino-acid chain; its full sequence is Tryptophan synthase beta chain (404 aa).

At Lys90 the chain carries N6-(pyridoxal phosphate)lysine.

This sequence belongs to the TrpB family. Tetramer of two alpha and two beta chains. Requires pyridoxal 5'-phosphate as cofactor.

The catalysed reaction is (1S,2R)-1-C-(indol-3-yl)glycerol 3-phosphate + L-serine = D-glyceraldehyde 3-phosphate + L-tryptophan + H2O. It participates in amino-acid biosynthesis; L-tryptophan biosynthesis; L-tryptophan from chorismate: step 5/5. The beta subunit is responsible for the synthesis of L-tryptophan from indole and L-serine. The protein is Tryptophan synthase beta chain (trpB) of Geobacillus stearothermophilus (Bacillus stearothermophilus).